We begin with the raw amino-acid sequence, 90 residues long: Conotoxin TxMMSK-06 (90 aa).

The N-terminal stretch at 1 to 22 is a signal peptide; sequence MMSKLGVLLTICLLLFPHTAVP. A propeptide spanning residues 23 to 74 is cleaved from the precursor; sequence LDGDQHADQPAERLQDDISSEHHPMLNSIRRREQNQFMSFTSVKLRDSRGER. The segment at 24-43 is disordered; sequence DGDQHADQPAERLQDDISSE. The span at 25–43 shows a compositional bias: basic and acidic residues; the sequence is GDQHADQPAERLQDDISSE. 3 disulfides stabilise this stretch: cysteine 75-cysteine 89, cysteine 76-cysteine 85, and cysteine 81-cysteine 88. Position 87 is a 4-hydroxyproline (proline 87). Cysteine 89 carries the post-translational modification Cysteine amide.

Belongs to the conotoxin M superfamily. Expressed by the venom duct.

It localises to the secreted. This is Conotoxin TxMMSK-06 from Conus textile (Cloth-of-gold cone).